A 798-amino-acid chain; its full sequence is Neuroligin-1 (798 aa).

An N-terminal signal peptide occupies residues 1–17 (MERIYLLLLLFLPRIRS). Residues 18 to 685 (YDVRSVTTSW…AAGSFTGKAL (668 aa)) are Extracellular-facing. An intrachain disulfide couples cysteine 86 to cysteine 125. 3 N-linked (GlcNAc...) asparagine glycosylation sites follow: asparagine 164, asparagine 292, and asparagine 315. Cysteines 288 and 307 form a disulfide. The disordered stretch occupies residues 636-676 (ANLPFPPPPMPPSPPPELTTKPKPSESPTTLQTTTESEKAA). Positions 639–652 (PFPPPPMPPSPPPE) are enriched in pro residues. The segment covering 653 to 665 (LTTKPKPSESPTT) has biased composition (low complexity). The chain crosses the membrane as a helical span at residues 686 to 706 (GGVIFIGCGFLIMNVCLLIAV). The Cytoplasmic segment spans residues 707–798 (RREWGKKRRN…QAPTLEEIQV (92 aa)). The disordered stretch occupies residues 731–765 (HGGGAEQYNSLNSPEPLLSASHKNSTSMRPAGISP).

This sequence belongs to the type-B carboxylesterase/lipase family. Interacts (via extracellular domain) with isoform b of madd-4; the interaction is required for the localization to postsynaptic domains. Interacts with unc-49.

It localises to the cell membrane. It is found in the synapse. In terms of biological role, probable neuronal cell surface protein thought to be involved in cell-cell-interactions by forming intercellular junctions through binding to beta-neurexins. Plays a role in the clustering of the GABA(A) receptor unc-49 at postsynaptic sites in neuromuscular junctions (NMJs) via the interaction with madd-4 and neurexin nrx-1 and is thereby required for normal GABAergic synaptic transmission. In Caenorhabditis elegans, this protein is Neuroligin-1 (nlg-1).